A 213-amino-acid chain; its full sequence is StAR-related lipid transfer protein 5 (213 aa).

Residues 1–213 (MDPALAAQMS…LQKAVKQFHE (213 aa)) form the START domain.

Its function is as follows. May be involved in the intracellular transport of sterols or other lipids. May bind cholesterol or other sterols. In Homo sapiens (Human), this protein is StAR-related lipid transfer protein 5 (STARD5).